Here is a 471-residue protein sequence, read N- to C-terminus: ATP synthase subunit beta 1 (471 aa).

An ATP-binding site is contributed by 157–164 (GGAGVGKT).

Belongs to the ATPase alpha/beta chains family. In terms of assembly, F-type ATPases have 2 components, CF(1) - the catalytic core - and CF(0) - the membrane proton channel. CF(1) has five subunits: alpha(3), beta(3), gamma(1), delta(1), epsilon(1). CF(0) has three main subunits: a(1), b(2) and c(9-12). The alpha and beta chains form an alternating ring which encloses part of the gamma chain. CF(1) is attached to CF(0) by a central stalk formed by the gamma and epsilon chains, while a peripheral stalk is formed by the delta and b chains.

Its subcellular location is the cell inner membrane. The catalysed reaction is ATP + H2O + 4 H(+)(in) = ADP + phosphate + 5 H(+)(out). Produces ATP from ADP in the presence of a proton gradient across the membrane. The catalytic sites are hosted primarily by the beta subunits. This Pelobacter propionicus (strain DSM 2379 / NBRC 103807 / OttBd1) protein is ATP synthase subunit beta 1.